A 162-amino-acid chain; its full sequence is Austinoid biosynthesis clusters protein J (162 aa).

Belongs to the trt14 isomerase family. Homodimer.

The protein operates within secondary metabolite biosynthesis; terpenoid biosynthesis. Its function is as follows. Part of the gene cluster B that mediates the biosynthesis of austinol and dehydroaustinol, two fungal meroterpenoids. The first step of the pathway is the synthesis of 3,5-dimethylorsellinic acid by the polyketide synthase ausA. 3,5-dimethylorsellinic acid is then prenylated by the polyprenyl transferase ausN. Further epoxidation by the FAD-dependent monooxygenase ausM and cyclization by the probable terpene cyclase ausL lead to the formation of protoaustinoid A. Protoaustinoid A is then oxidized to spiro-lactone preaustinoid A3 by the combined action of the FAD-binding monooxygenases ausB and ausC, and the dioxygenase ausE. Acid-catalyzed keto-rearrangement and ring contraction of the tetraketide portion of preaustinoid A3 by ausJ lead to the formation of preaustinoid A4. The aldo-keto reductase ausK, with the help of ausH, is involved in the next step by transforming preaustinoid A4 into isoaustinone which is in turn hydroxylated by the P450 monooxygenase ausI to form austinolide. Finally, the cytochrome P450 monooxygenase ausG modifies austinolide to austinol. Austinol can be further modified to dehydroaustinol which forms a diffusible complex with diorcinol that initiates conidiation. Due to genetic rearrangements of the clusters and the subsequent loss of some enzymes, the end products of the Emericella nidulans austinoid biosynthesis clusters are austinol and dehydroaustinol, even if additional enzymes, such as the O-acetyltransferase ausQ and the cytochrome P450 monooxygenase ausR are still functional. The sequence is that of Austinoid biosynthesis clusters protein J from Emericella nidulans (strain FGSC A4 / ATCC 38163 / CBS 112.46 / NRRL 194 / M139) (Aspergillus nidulans).